The chain runs to 210 residues: Na(+)-translocating NADH-quinone reductase subunit D (210 aa).

A run of 6 helical transmembrane segments spans residues 10 to 30, 42 to 62, 72 to 92, 103 to 123, 131 to 151, and 178 to 198; these read VLIG…GVCS, LVMT…ISLI, IIVQ…VLQA, VFVG…AYAM, FMDG…VGFV, and NGLL…IWII.

This sequence belongs to the NqrDE/RnfAE family. As to quaternary structure, composed of six subunits; NqrA, NqrB, NqrC, NqrD, NqrE and NqrF.

The protein resides in the cell inner membrane. The catalysed reaction is a ubiquinone + n Na(+)(in) + NADH + H(+) = a ubiquinol + n Na(+)(out) + NAD(+). Functionally, NQR complex catalyzes the reduction of ubiquinone-1 to ubiquinol by two successive reactions, coupled with the transport of Na(+) ions from the cytoplasm to the periplasm. NqrA to NqrE are probably involved in the second step, the conversion of ubisemiquinone to ubiquinol. The protein is Na(+)-translocating NADH-quinone reductase subunit D of Shewanella pealeana (strain ATCC 700345 / ANG-SQ1).